The following is a 227-amino-acid chain: Claudin-15 (227 aa).

Position 1 (M1) is a topological domain, cytoplasmic. Residues 2-24 (SIAVETFGFFMSALGLLMLGVTL) traverse the membrane as a helical segment. At 25-74 (PNSYWRVSTVHGNVITTNTIFENLWYSCATDSLGVSNCWDFPSMLALSGY) the chain is on the extracellular side. C52 and C62 are oxidised to a cystine. A helical membrane pass occupies residues 75–99 (VQGCRALMITAILLGFLGLFLGMVG). Residues 100 to 115 (LRCTNVGNIDLSRKAK) lie on the Cytoplasmic side of the membrane. Position 111 is a phosphoserine (S111). The chain crosses the membrane as a helical span at residues 116 to 140 (LLAIAGAFHILAGACGMVAISWYAV). Over 141–159 (NITTDFFNPLYVGTKYELG) the chain is Extracellular. The segment at 146-147 (FF) is important for the formation of tight-junction strand-like structures. A helical membrane pass occupies residues 160 to 182 (SALYLGWSASLLSILGGICVFST). Residues 183–227 (CCCDSKEDPATRVGLPYKPSTVVTARATSDESDVSFGKYGKNAYV) are Cytoplasmic-facing. A phosphoserine mark is found at S211, S214, and S217.

The protein belongs to the claudin family. In terms of assembly, can form homo- and heteropolymeric tight junction strands. Palmitoylated. Detected in kidney, jejunum and colon (at protein level).

Its subcellular location is the cell junction. It is found in the tight junction. It localises to the cell membrane. The catalysed reaction is Na(+)(in) = Na(+)(out). It carries out the reaction K(+)(in) = K(+)(out). It catalyses the reaction Cs(+)(in) = Cs(+)(out). The enzyme catalyses Rb(+)(in) = Rb(+)(out). The catalysed reaction is Li(+)(in) = Li(+)(out). It carries out the reaction NH4(+)(in) = NH4(+)(out). It catalyses the reaction methylamine(out) = methylamine(in). The enzyme catalyses H2O(in) = H2O(out). Its function is as follows. Forms paracellular channels: polymerizes in tight junction strands with cation- and water-selective channels through the strands, conveying epithelial permeability in a process known as paracellular tight junction permeability. In intestinal epithelium, allows for sodium and water fluxes from the peritoneal side to the lumen of the intestine to regulate nutrient absorption and intestinal morphogenesis. This is Claudin-15 from Rattus norvegicus (Rat).